The following is a 155-amino-acid chain: Cytochrome c-type biogenesis protein CcmE (155 aa).

Residues 1 to 8 lie on the Cytoplasmic side of the membrane; the sequence is MNPVRKKR. Residues 9–29 traverse the membrane as a helical; Signal-anchor for type II membrane protein segment; it reads LFIVLAILAGVGIAVALALSA. Residues 30–155 are Periplasmic-facing; that stretch reads LQQNINLFYT…YEGGKQEYAK (126 aa). Residues H124 and Y128 each contribute to the heme site.

It belongs to the CcmE/CycJ family.

It is found in the cell inner membrane. Its function is as follows. Heme chaperone required for the biogenesis of c-type cytochromes. Transiently binds heme delivered by CcmC and transfers the heme to apo-cytochromes in a process facilitated by CcmF and CcmH. The chain is Cytochrome c-type biogenesis protein CcmE from Stutzerimonas stutzeri (strain A1501) (Pseudomonas stutzeri).